The primary structure comprises 353 residues: UPF0283 membrane protein YcjF (353 aa).

The next 3 helical transmembrane spans lie at 70-90, 100-120, and 213-233; these read MVMG…VQWT, VALG…GSVV, and ESTL…FIAW.

The protein belongs to the UPF0283 family.

It is found in the cell inner membrane. The sequence is that of UPF0283 membrane protein YcjF from Escherichia coli O127:H6 (strain E2348/69 / EPEC).